The primary structure comprises 150 residues: MESANASTPAKTIDQLCKECNLSMHSLQILCVFCRKTLSTAEVYAFQYKSLYIVWRGQFPFAACACCLEIQGKINQFRHFDFAGFAVTVEEDTKQSILDVLIRCYLCHKPLCEVEKLRHILQKARFIKLNSSWKGRCFHCWSSCMENILP.

Zinc fingers lie at residues 31–67 (CVFC…CACC) and 104–140 (CYLC…CFHC).

Belongs to the papillomaviridae E6 protein family. In terms of assembly, forms homodimers. Interacts with ubiquitin-protein ligase UBE3A/E6-AP; this interaction stimulates UBE3A ubiquitin activity. Interacts with host TP53 and EP300; this interaction inhibits TP53 activity.

It is found in the host cytoplasm. It localises to the host nucleus. Plays a major role in the induction and maintenance of cellular transformation. E6 associates with host UBE3A/E6-AP ubiquitin-protein ligase and modulates its activity. Sequesters tumor suppressor TP53 in the host cytoplasm and modulates its activity by interacting with host EP300 that results in the reduction of TP53 acetylation and activation. In turn, apoptosis induced by DNA damage is inhibited. E6 also protects host keratinocytes from apoptosis by mediating the degradation of host BAK1. May also inhibit host immune response. This is Protein E6 from Human papillomavirus 13.